We begin with the raw amino-acid sequence, 158 residues long: SsrA-binding protein (158 aa).

This sequence belongs to the SmpB family.

The protein resides in the cytoplasm. In terms of biological role, required for rescue of stalled ribosomes mediated by trans-translation. Binds to transfer-messenger RNA (tmRNA), required for stable association of tmRNA with ribosomes. tmRNA and SmpB together mimic tRNA shape, replacing the anticodon stem-loop with SmpB. tmRNA is encoded by the ssrA gene; the 2 termini fold to resemble tRNA(Ala) and it encodes a 'tag peptide', a short internal open reading frame. During trans-translation Ala-aminoacylated tmRNA acts like a tRNA, entering the A-site of stalled ribosomes, displacing the stalled mRNA. The ribosome then switches to translate the ORF on the tmRNA; the nascent peptide is terminated with the 'tag peptide' encoded by the tmRNA and targeted for degradation. The ribosome is freed to recommence translation, which seems to be the essential function of trans-translation. The polypeptide is SsrA-binding protein (Caldicellulosiruptor bescii (strain ATCC BAA-1888 / DSM 6725 / KCTC 15123 / Z-1320) (Anaerocellum thermophilum)).